A 324-amino-acid polypeptide reads, in one-letter code: Methionyl-tRNA formyltransferase (324 aa).

Residue S109–P112 participates in (6S)-5,6,7,8-tetrahydrofolate binding. A disordered region spans residues L305 to T324.

The protein belongs to the Fmt family.

The catalysed reaction is L-methionyl-tRNA(fMet) + (6R)-10-formyltetrahydrofolate = N-formyl-L-methionyl-tRNA(fMet) + (6S)-5,6,7,8-tetrahydrofolate + H(+). Attaches a formyl group to the free amino group of methionyl-tRNA(fMet). The formyl group appears to play a dual role in the initiator identity of N-formylmethionyl-tRNA by promoting its recognition by IF2 and preventing the misappropriation of this tRNA by the elongation apparatus. The protein is Methionyl-tRNA formyltransferase of Nitrosomonas europaea (strain ATCC 19718 / CIP 103999 / KCTC 2705 / NBRC 14298).